We begin with the raw amino-acid sequence, 279 residues long: Oxygen-dependent coproporphyrinogen-III oxidase (279 aa).

Serine 102 is a binding site for substrate. A divalent metal cation contacts are provided by histidine 106 and histidine 116. Histidine 116 (proton donor) is an active-site residue. Substrate is bound at residue asparagine 118–arginine 120. Histidine 149 and histidine 179 together coordinate a divalent metal cation. Residues tyrosine 244–asparagine 279 form an important for dimerization region.

This sequence belongs to the aerobic coproporphyrinogen-III oxidase family. In terms of assembly, homodimer. A divalent metal cation serves as cofactor.

Its subcellular location is the cytoplasm. It catalyses the reaction coproporphyrinogen III + O2 + 2 H(+) = protoporphyrinogen IX + 2 CO2 + 2 H2O. The protein operates within porphyrin-containing compound metabolism; protoporphyrin-IX biosynthesis; protoporphyrinogen-IX from coproporphyrinogen-III (O2 route): step 1/1. Functionally, involved in the heme biosynthesis. Catalyzes the aerobic oxidative decarboxylation of propionate groups of rings A and B of coproporphyrinogen-III to yield the vinyl groups in protoporphyrinogen-IX. This Rickettsia akari (strain Hartford) protein is Oxygen-dependent coproporphyrinogen-III oxidase.